Reading from the N-terminus, the 635-residue chain is Ankyrin repeat and SOCS box protein 2 (635 aa).

Positions 8-16 (RGSQCTIGQ) are required for FLNA degradation. The 20-residue stretch at 26–45 (SEDELVQMAIEQSLADKTRG) folds into the UIM domain. 12 ANK repeats span residues 104–133 (APADPLIKAIKDGDEEALKTMIKEGKNLAE), 137–167 (EGWLPLHEAAYYGQVGCLKVLQRAYPGTIDQ), 171–200 (QEETAVYLATCRGHLDCLLSLLQAGAEPDI), 204–233 (SRETPLYKACERKNAEAVKILVQHNADTNH), 237–266 (RGWTALHESVSRNDLEVMQILVSGGAKVES), 270–299 (YGITPLFVAAQSGQLEALRFLAKYGADINT), 303–332 (DNASALYEACKNEHEEVVEFLLSQGADANK), 336–365 (DGLLPLHIASKKGNYRIVQMLLPVTSRTRI), 368–397 (SGVSPLHLAAERNHDEVLEALLSARFDVNT), 410–439 (RRSSALYFAVVNNNVYATELLLQHGADPNR), 440–469 (DVISPLLVAIRHGCLRTMQLLLDHGANIDA), and 476–504 (TAFPATIMFAMKCLSLLKFLMDLGCDGEP). Position 371 is a phosphoserine; by MAPK (S371). The region spanning 586–635 (IKEKAEPPRPLAHLCRLRVRKAIGKYRIKLLDTLPLPGRLIRYLKYENTQ) is the SOCS box domain.

This sequence belongs to the ankyrin SOCS box (ASB) family. Component of a probable ECS E3 ubiquitin-protein ligase complex which contains CUL5, either RBX1 or RNF7/RBX2, Elongin BC complex (ELOB and ELOC) and ASB2. Interacts with SKP2. Through its interaction with SKP2, likely to bridge the formation of dimeric E3-ubiquitin-protein ligase complexes composed of an ECS complex and an SCF(SKP2) complex. Interacts with JAK2; the interaction targets JAK2 for Notch-mediated proteasomal degradation. Interacts with TCF3/E2A; the interaction is mediated by SKP2 and targets TCF3 for Notch-mediated proteasomal degradation. In terms of assembly, interacts with DES. Monoubiquitinated. Post-translationally, not monoubiquitinated. In terms of processing, phosphorylation at Ser-371 is required for association with FLNA and subsequent FLNA degradation. Expressed in muscle cells. As to expression, expressed in hematopoietic cells.

Its subcellular location is the cytoplasm. It is found in the cytoskeleton. The protein resides in the stress fiber. It localises to the myofibril. The protein localises to the sarcomere. Its subcellular location is the z line. The protein operates within protein modification; protein ubiquitination. Its function is as follows. Substrate-recognition component of a SCF-like ECS (Elongin-Cullin-SOCS-box protein) E3 ubiquitin-protein ligase complex which mediates the ubiquitination and subsequent proteasomal degradation of target proteins. Mediates Notch-induced ubiquitination and degradation of substrates including TCF3/E2A and JAK2. Required during embryonic heart development for complete heart looping. Required for cardiomyocyte differentiation. Specifically promotes the ubiquitination of SMAD9 and targets it for proteasomal degradation, leading to avoid excessive accumulation of SMAD9. Plays a role in the regulation of NK-cell migration by modulating protein levels of filamin A/FLNA via regulation of its ubiquitination and proteasome degradation. In terms of biological role, involved in myogenic differentiation and targets filamin FLNB for proteasomal degradation but not filamin FLNA. Also targets DES for proteasomal degradation. Acts as a negative regulator of skeletal muscle mass. Targets filamins FLNA and FLNB for proteasomal degradation. This leads to enhanced adhesion of hematopoietic cells to fibronectin. Required for FLNA degradation in immature cardiomyocytes which is necessary for actin cytoskeleton remodeling, leading to proper organization of myofibrils and function of mature cardiomyocytes. Required for degradation of FLNA and FLNB in immature dendritic cells (DC) which enhances immature DC migration by promoting DC podosome formation and DC-mediated degradation of the extracellular matrix. Does not promote proteasomal degradation of tyrosine-protein kinases JAK1 or JAK2 in hematopoietic cells. The protein is Ankyrin repeat and SOCS box protein 2 (ASB2) of Homo sapiens (Human).